The primary structure comprises 406 residues: 2,3-bisphosphoglycerate-independent phosphoglycerate mutase (406 aa).

It belongs to the BPG-independent phosphoglycerate mutase family. A-PGAM subfamily.

The enzyme catalyses (2R)-2-phosphoglycerate = (2R)-3-phosphoglycerate. It participates in carbohydrate degradation; glycolysis; pyruvate from D-glyceraldehyde 3-phosphate: step 3/5. Catalyzes the interconversion of 2-phosphoglycerate and 3-phosphoglycerate. The polypeptide is 2,3-bisphosphoglycerate-independent phosphoglycerate mutase (Methanococcus maripaludis (strain C6 / ATCC BAA-1332)).